Reading from the N-terminus, the 318-residue chain is Protein-methionine-sulfoxide reductase catalytic subunit MsrP (318 aa).

Positions 1–40 (MNRFTRYDVTPEAIFNQRRQIIKAMGLGAAALSLPNIGFA) form a signal peptide, tat-type signal. Mo-molybdopterin contacts are provided by residues Asn72, 75 to 76 (YE), Cys130, Thr165, Asn217, Arg222, and 233 to 235 (SIK).

Belongs to the MsrP family. In terms of assembly, heterodimer of a catalytic subunit (MsrP) and a heme-binding subunit (MsrQ). Mo-molybdopterin serves as cofactor. Post-translationally, predicted to be exported by the Tat system. The position of the signal peptide cleavage has not been experimentally proven.

The protein resides in the periplasm. The enzyme catalyses L-methionyl-[protein] + a quinone + H2O = L-methionyl-(S)-S-oxide-[protein] + a quinol. It catalyses the reaction L-methionyl-[protein] + a quinone + H2O = L-methionyl-(R)-S-oxide-[protein] + a quinol. In terms of biological role, part of the MsrPQ system that repairs oxidized periplasmic proteins containing methionine sulfoxide residues (Met-O), using respiratory chain electrons. Thus protects these proteins from oxidative-stress damage caused by reactive species of oxygen and chlorine generated by the host defense mechanisms. MsrPQ is essential for the maintenance of envelope integrity under bleach stress, rescuing a wide series of structurally unrelated periplasmic proteins from methionine oxidation. The catalytic subunit MsrP is non-stereospecific, being able to reduce both (R-) and (S-) diastereoisomers of methionine sulfoxide. The protein is Protein-methionine-sulfoxide reductase catalytic subunit MsrP of Actinobacillus pleuropneumoniae serotype 5b (strain L20).